We begin with the raw amino-acid sequence, 99 residues long: A-type ATP synthase subunit F (99 aa).

It belongs to the V-ATPase F subunit family. In terms of assembly, has multiple subunits with at least A(3), B(3), C, D, E, F, H, I and proteolipid K(x).

Its subcellular location is the cell membrane. In terms of biological role, component of the A-type ATP synthase that produces ATP from ADP in the presence of a proton gradient across the membrane. This chain is A-type ATP synthase subunit F, found in Methanococcus maripaludis (strain DSM 14266 / JCM 13030 / NBRC 101832 / S2 / LL).